A 70-amino-acid polypeptide reads, in one-letter code: U2-agatoxin-Ao1a (70 aa).

Residues M1 to A20 form the signal peptide. A propeptide spanning residues V21–R34 is cleaved from the precursor. 3 disulfides stabilise this stretch: C37-C53, C44-C58, and C52-C68. L69 is modified (leucine amide).

Belongs to the neurotoxin 01 (U2-agtx) family. In terms of tissue distribution, expressed by the venom gland.

Its subcellular location is the secreted. Its function is as follows. Insect active toxin causing rapid but reversible paralysis in crickets. No activity shown in mammals. Suppresses the excitatory postsynaptic potentials evoked in lobster neuromuscular synaptic preparations, possibly by blocking the presynaptic calcium channel. Induces instantaneous reversible paralysis when injected into crickets. Does not show effect on mammalian Cav2.1/CACNA1A, Cav2.2/CACNA1B and Cav2.3/CACNA1E. This Agelena orientalis (Funnel-web spider) protein is U2-agatoxin-Ao1a.